A 290-amino-acid polypeptide reads, in one-letter code: Lysine export transcriptional regulatory protein LysG (290 aa).

The 57-residue stretch at 1 to 57 folds into the HTH lysR-type domain; sequence MNPIHLDTLLTIIDEGSFENASLALSISPSAVSQRIKALEKSVGRVLVSRTQPAVAT. Residues 18–37 constitute a DNA-binding region (H-T-H motif); that stretch reads FENASLALSISPSAVSQRIK.

The protein belongs to the LysR transcriptional regulatory family.

Positively regulates the expression of the exporter LysE. The polypeptide is Lysine export transcriptional regulatory protein LysG (lysG) (Corynebacterium efficiens (strain DSM 44549 / YS-314 / AJ 12310 / JCM 11189 / NBRC 100395)).